Reading from the N-terminus, the 861-residue chain is Envelope glycoprotein gp160 (861 aa).

A signal peptide spans 1-32 (MRVKEKYQHLWRWGWKWGTMLLGILMICSATE). The Extracellular portion of the chain corresponds to 33–689 (KLWVTVYYGV…ITNWLWYIKI (657 aa)). Residues Cys-54 and Cys-74 are joined by a disulfide bond. Residues Asn-88, Asn-136, Asn-141, Asn-146, Asn-161, and Asn-165 are each glycosylated (N-linked (GlcNAc...) asparagine; by host). Cystine bridges form between Cys-119–Cys-210, Cys-126–Cys-201, Cys-131–Cys-162, Cys-223–Cys-252, and Cys-233–Cys-244. The tract at residues 131–161 (CTDLGNATNTNSSNTNSSSGEMMMEKGEIKN) is V1. Residues 162–201 (CSFNISTSIRGKVQKEYAFFYKLDIIPIDNDTTSYTLTSC) are V2. The Putative binding site to alpha-4/beta-7 integrin signature appears at 184 to 186 (LDI). 13 N-linked (GlcNAc...) asparagine; by host glycosylation sites follow: Asn-191, Asn-202, Asn-235, Asn-239, Asn-246, Asn-267, Asn-281, Asn-294, Asn-300, Asn-306, Asn-337, Asn-344, and Asn-361. The tract at residues 301-335 (CTRPNNNTRKSIRIQRGPGRAFVTIGKIGNMRQAH) is V3. Cysteines 301 and 336 form a disulfide. Residues 369–379 (SSGGDPEIVTH) form a CD4-binding loop region. Intrachain disulfides connect Cys-383–Cys-450 and Cys-390–Cys-423. Positions 390-423 (CNSTQLFNSTWFNSTWSTEGSNNTEGSDTITLPC) are V4. 6 N-linked (GlcNAc...) asparagine; by host glycosylation sites follow: Asn-391, Asn-397, Asn-402, Asn-411, Asn-453, and Asn-468. V5 stretches follow at residues 466-476 (NNNGSEIFRPG) and 468-476 (NGSEIFRPG). The tract at residues 517-537 (AVGIGALFLGFLGAAGSTMGA) is fusion peptide. The segment at 579–597 (KQLQARILAVERYLKDQQL) is immunosuppression. A disulfide bond links Cys-603 and Cys-609. N-linked (GlcNAc...) asparagine; by host glycosylation is found at Asn-616, Asn-621, Asn-630, Asn-642, and Asn-679. Residues 638 to 672 (REINNYTSLIHSLIEESQNQQEKNEQELLELDKWA) are a coiled coil. The MPER; binding to GalCer stretch occupies residues 667–688 (ELDKWASLWNWFNITNWLWYIK). The chain crosses the membrane as a helical span at residues 690–710 (FIMIVGGLVGLRIVFAVLSIV). At 711-861 (NRVRQGYSPL…IRQGLERILL (151 aa)) the chain is on the cytoplasmic side. The short motif at 717–720 (YSPL) is the YXXL motif; contains endocytosis signal element. The disordered stretch occupies residues 723–747 (QTHLPTPRGPDRPEGIEEEGGERDR). 2 S-palmitoyl cysteine; by host lipidation sites follow: Cys-769 and Cys-842. The Di-leucine internalization motif signature appears at 860–861 (LL).

It belongs to the HIV-1 env protein family. As to quaternary structure, the mature envelope protein (Env) consists of a homotrimer of non-covalently associated gp120-gp41 heterodimers. The resulting complex protrudes from the virus surface as a spike. There seems to be as few as 10 spikes on the average virion. Interacts with host CD4, CCR5 and CXCR4. Gp120 also interacts with the C-type lectins CD209/DC-SIGN and CLEC4M/DC-SIGNR (collectively referred to as DC-SIGN(R)). Gp120 and gp41 interact with GalCer. Gp120 interacts with host ITGA4/ITGB7 complex; on CD4+ T-cells, this interaction results in rapid activation of integrin ITGAL/LFA-1, which facilitates efficient cell-to-cell spreading of HIV-1. Gp120 interacts with cell-associated heparan sulfate; this interaction increases virus infectivity on permissive cells and may be involved in infection of CD4- cells. The mature envelope protein (Env) consists of a homotrimer of non-covalently associated gp120-gp41 heterodimers. The resulting complex protrudes from the virus surface as a spike. There seems to be as few as 10 spikes on the average virion. Post-translationally, highly glycosylated by host. The high number of glycan on the protein is reffered to as 'glycan shield' because it contributes to hide protein sequence from adaptive immune system. Palmitoylation of the transmembrane protein and of Env polyprotein (prior to its proteolytic cleavage) is essential for their association with host cell membrane lipid rafts. Palmitoylation is therefore required for envelope trafficking to classical lipid rafts, but not for viral replication. In terms of processing, specific enzymatic cleavages in vivo yield mature proteins. Envelope glycoproteins are synthesized as an inactive precursor that is heavily N-glycosylated and processed likely by host cell furin in the Golgi to yield the mature SU and TM proteins. The cleavage site between SU and TM requires the minimal sequence [KR]-X-[KR]-R. About 2 of the 9 disulfide bonds of gp41 are reduced by P4HB/PDI, following binding to CD4 receptor.

The protein localises to the virion membrane. It localises to the host cell membrane. Its subcellular location is the host endosome membrane. Functionally, oligomerizes in the host endoplasmic reticulum into predominantly trimers. In a second time, gp160 transits in the host Golgi, where glycosylation is completed. The precursor is then proteolytically cleaved in the trans-Golgi and thereby activated by cellular furin or furin-like proteases to produce gp120 and gp41. Attaches the virus to the host lymphoid cell by binding to the primary receptor CD4. This interaction induces a structural rearrangement creating a high affinity binding site for a chemokine coreceptor like CXCR4 and/or CCR5. Acts as a ligand for CD209/DC-SIGN and CLEC4M/DC-SIGNR, which are respectively found on dendritic cells (DCs), and on endothelial cells of liver sinusoids and lymph node sinuses. These interactions allow capture of viral particles at mucosal surfaces by these cells and subsequent transmission to permissive cells. HIV subverts the migration properties of dendritic cells to gain access to CD4+ T-cells in lymph nodes. Virus transmission to permissive T-cells occurs either in trans (without DCs infection, through viral capture and transmission), or in cis (following DCs productive infection, through the usual CD4-gp120 interaction), thereby inducing a robust infection. In trans infection, bound virions remain infectious over days and it is proposed that they are not degraded, but protected in non-lysosomal acidic organelles within the DCs close to the cell membrane thus contributing to the viral infectious potential during DCs' migration from the periphery to the lymphoid tissues. On arrival at lymphoid tissues, intact virions recycle back to DCs' cell surface allowing virus transmission to CD4+ T-cells. Its function is as follows. Acts as a class I viral fusion protein. Under the current model, the protein has at least 3 conformational states: pre-fusion native state, pre-hairpin intermediate state, and post-fusion hairpin state. During fusion of viral and target intracellular membranes, the coiled coil regions (heptad repeats) assume a trimer-of-hairpins structure, positioning the fusion peptide in close proximity to the C-terminal region of the ectodomain. The formation of this structure appears to drive apposition and subsequent fusion of viral and target cell membranes. Complete fusion occurs in host cell endosomes and is dynamin-dependent, however some lipid transfer might occur at the plasma membrane. The virus undergoes clathrin-dependent internalization long before endosomal fusion, thus minimizing the surface exposure of conserved viral epitopes during fusion and reducing the efficacy of inhibitors targeting these epitopes. Membranes fusion leads to delivery of the nucleocapsid into the cytoplasm. The polypeptide is Envelope glycoprotein gp160 (Homo sapiens (Human)).